The chain runs to 720 residues: MPRDYQAEKEKCKTFLQEFYKDDELGKKNFKYGVQLANIAHREQVALYIDLDDLAEEDPELVDAICENTRRYTNLFADAVQELLPQYKEREVVHKDALDVYIEHRLMMEQRGRDPSETRDPHNQYPPELMRRFELYFKAPSSSKARVVRDVKADSIGKLVTVRGIVTRVTEVKPMMVVATYTCDQCGAETYQPIQSPTFMPLIMCPSRECQTNRSGGRLYLQTRGSKFIKFQELKIQEHSDQVPVGNIPRCMSVYVRGENTRLAQPGDHVSITGVFLPMLRTGFRQVVQGLLSETYLESHRLVKMNKTEDDELGTEELSEEELRQITEEDFYEKLAASIAPEIYGHEDVKKALLLLLVGGVDNSPRGMKIRGNINICLMGDPGVAKSQLLSYIDRLAPRSQYTTGRGSSGVGLTAAVMKDPVTGEMTLEGGALVLADQGVCCIDEFDKMMDTDRTAIHEVMEQQTISIAKAGIMTTLNARCSILAAANPAYGRYNPKKTVEQNIQLPAALLSRFDLLWLIQDKPDRDNDLRLAQHITYVHQHSKQPPSQFQPLDMKLMRRYITMCKRKQPAIPESLADYLTAAYVEMRKEARTNKDMTFTSARTLLSILRLSTALARLRLEDVVEKEDVNEAMRLTEMSKDSLLGDKGQTSRTQRPADVIFSTIREMVPEKGARSVKYSEAEQRAVSKGFTPAQFEAALEEYEELNVWLVNQARTKITFV.

The C4-type zinc-finger motif lies at 183–210; the sequence is CDQCGAETYQPIQSPTFMPLIMCPSREC. Residues 331-537 form the MCM domain; sequence FYEKLAASIA…NDLRLAQHIT (207 aa). Positions 344, 383, 385, 386, 387, 488, 513, and 603 each coordinate ATP. An Arginine finger motif is present at residues 512-515; it reads SRFD.

It belongs to the MCM family. As to quaternary structure, component of the mcm2-7 complex (RLF-M). The complex forms a toroidal hexameric ring with the proposed subunit order mcm2-mcm6-mcm4-mcm7-mcm3-mcm5. The heterodimer of mmcm3/mcm5 interacts with mcm4, mmcm6, mcm7 and weakly with mcm2. The N-terminus is required for interaction with mmcm3, though this interaction may not be direct, and remains in a complex with mmcm3 throughout the cell cycle. Begins to associate with zmcm6 at the neurula stage. Component of the replisome complex. Component of the CMG helicase complex, composed of the mcm2-7 complex, the GINS complex and cdc45. Ubiquitinated by traip when forks converge following formation of DNA interstrand cross-links. Short ubiquitin chains on mcm7 promote recruitment of DNA glycosylase neil3. If the interstrand cross-link cannot be cleaved by neil3, the ubiquitin chains continue to grow on mcm7, promoting the unloading of the CMG helicase complex by the vcp/p97 ATPase.

The protein localises to the nucleus. The protein resides in the chromosome. The enzyme catalyses ATP + H2O = ADP + phosphate + H(+). Functionally, acts as a component of the mcm2-7 complex (mcm complex) which is the putative replicative helicase essential for 'once per cell cycle' DNA replication initiation and elongation in eukaryotic cells. The active ATPase sites in the mcm2-7 ring are formed through the interaction surfaces of two neighboring subunits such that a critical structure of a conserved arginine finger motif is provided in trans relative to the ATP-binding site of the Walker A box of the adjacent subunit. The six ATPase active sites, however, are likely to contribute differentially to the complex helicase activity. The existence of maternal and zygotic forms of mcm3 and mcm6 suggests that specific forms of mcm2-7 complexes may be used during different stages of development. This is DNA replication licensing factor mcm7 from Xenopus tropicalis (Western clawed frog).